A 311-amino-acid chain; its full sequence is Homeobox-leucine zipper protein HOX1 (311 aa).

2 disordered regions span residues 29–69 and 97–160; these read AGGA…SDHR and AETT…KKLR. Low complexity predominate over residues 119 to 145; the sequence is SSPNSTLSSLSGKRGAPSAATAAAAAA. Residues 154-213 constitute a DNA-binding region (homeobox); that stretch reads GSRKKLRLSKDQAAVLEDTFKEHNTLNPKQKAALARQLNLKPRQVEVWFQNRRARTKLKQ. Residues 212-256 form a leucine-zipper region; it reads KQTEVDCELLKRCCETLTDENRRLHRELQELRALKLATAAAAPHH. Residues 279–311 form a disordered region; the sequence is SAATTTRNNSGAAPARPVPTRPWPPAAAQRSSA. A compositionally biased stretch (polar residues) spans 280-289; it reads AATTTRNNSG. Over residues 294-303 the composition is skewed to pro residues; it reads RPVPTRPWPP.

This sequence belongs to the HD-ZIP homeobox family. Class II subfamily. Homodimer. May form a heterodimer with HOX2, HOX3 or HOX7. In terms of tissue distribution, expressed in root provascular and vascular cylinder, provascular and vascular strands of leaves, provascular and vascular strands of the whole panicle, in mature embryo provascular bundles of scutellum and embryonic axis and provascular and vascular strands of young immature spikelet organs. Expressed in differentiating and differentiated xylem and phloem elements, and in outer and inner bundle sheath cells of all vascular bundles. Expressed in auricles, ligules, culm, guard cells brac hairs and pollen.

It is found in the nucleus. In terms of biological role, probable transcription repressor involved leaf development. Binds to the DNA sequence 5'-CAAT[GC]ATTG-3'. May act as a regulatory switch to specify provascular cell fate. This Oryza sativa subsp. japonica (Rice) protein is Homeobox-leucine zipper protein HOX1 (HOX1).